The chain runs to 898 residues: Phosphoenolpyruvate carboxylase (898 aa).

Catalysis depends on residues H138 and K561.

It belongs to the PEPCase type 1 family. Mg(2+) is required as a cofactor.

The enzyme catalyses oxaloacetate + phosphate = phosphoenolpyruvate + hydrogencarbonate. Its function is as follows. Forms oxaloacetate, a four-carbon dicarboxylic acid source for the tricarboxylic acid cycle. The polypeptide is Phosphoenolpyruvate carboxylase (Streptococcus suis (strain 98HAH33)).